The sequence spans 92 residues: Small ribosomal subunit protein bS18 (92 aa).

This sequence belongs to the bacterial ribosomal protein bS18 family. Part of the 30S ribosomal subunit. Forms a tight heterodimer with protein bS6.

Binds as a heterodimer with protein bS6 to the central domain of the 16S rRNA, where it helps stabilize the platform of the 30S subunit. This is Small ribosomal subunit protein bS18 from Cupriavidus necator (strain ATCC 17699 / DSM 428 / KCTC 22496 / NCIMB 10442 / H16 / Stanier 337) (Ralstonia eutropha).